A 267-amino-acid polypeptide reads, in one-letter code: Undecaprenyl-diphosphatase (267 aa).

Helical transmembrane passes span 4–24 (ILII…PISS), 41–61 (NIQN…ILLF), 84–104 (ILIL…GFMF), 116–136 (YISY…FISL), 160–180 (CFSL…GLIL), 185–205 (YVLF…VLIL), 216–236 (ENIF…LIFG), and 246–266 (TSLI…LFTC).

This sequence belongs to the UppP family.

It localises to the cell membrane. It carries out the reaction di-trans,octa-cis-undecaprenyl diphosphate + H2O = di-trans,octa-cis-undecaprenyl phosphate + phosphate + H(+). Catalyzes the dephosphorylation of undecaprenyl diphosphate (UPP). Confers resistance to bacitracin. This is Undecaprenyl-diphosphatase from Wigglesworthia glossinidia brevipalpis.